Here is a 122-residue protein sequence, read N- to C-terminus: Large ribosomal subunit protein bL12 (122 aa).

Belongs to the bacterial ribosomal protein bL12 family. In terms of assembly, homodimer. Part of the ribosomal stalk of the 50S ribosomal subunit. Forms a multimeric L10(L12)X complex, where L10 forms an elongated spine to which 2 to 4 L12 dimers bind in a sequential fashion. Binds GTP-bound translation factors.

Forms part of the ribosomal stalk which helps the ribosome interact with GTP-bound translation factors. Is thus essential for accurate translation. This chain is Large ribosomal subunit protein bL12, found in Staphylococcus epidermidis (strain ATCC 35984 / DSM 28319 / BCRC 17069 / CCUG 31568 / BM 3577 / RP62A).